The chain runs to 218 residues: Peptidyl-prolyl cis-trans isomerase FKBP7 (218 aa).

Residues 1-19 (MNLLFRLAVFLSLWCCSDA) form the signal peptide. 2 N-linked (GlcNAc...) asparagine glycosylation sites follow: N41 and N128. Residues 49 to 141 (GDLLNAHYDG…MFEIELYAVT (93 aa)) form the PPIase FKBP-type domain. EF-hand domains follow at residues 141–176 (TKGPRSIETFKQIDTDNDRQLSKAEIELYLQKDFEK) and 185–218 (YQKAVLEDIFKKNDHNGDGFISPKEYNVHQHDEL). The Ca(2+) site is built by D154, D156, D158, Q160, E165, D198, N200, D202, and E209. A disordered region spans residues 197–218 (NDHNGDGFISPKEYNVHQHDEL). The Prevents secretion from ER signature appears at 215-218 (HDEL).

Glycosylated. In terms of tissue distribution, expressed at highest levels in heart, lung and testis. Weakly expressed in kidney and lymph node. Little or no expression detected in brain, thymus, spleen and liver.

The protein resides in the endoplasmic reticulum lumen. It carries out the reaction [protein]-peptidylproline (omega=180) = [protein]-peptidylproline (omega=0). Its function is as follows. PPIases accelerate the folding of proteins during protein synthesis. This is Peptidyl-prolyl cis-trans isomerase FKBP7 (Fkbp7) from Mus musculus (Mouse).